Consider the following 142-residue polypeptide: MVLSADDKSNVKAAWGKVGGNAGEFGAEALERMFLGFPTTKTYFPHFDLSHGSAQVKAHGKKVGDALTLAVGHLDDLPGALSNLSDLHAHKLRVDPVNFKLLSHCLLSTLAVHLPNDFTPAVHASLDKFLSTVSTVLTSKYR.

One can recognise a Globin domain in the interval 2-142 (VLSADDKSNV…VSTVLTSKYR (141 aa)). Residue histidine 59 participates in O2 binding. Residue histidine 88 participates in heme b binding.

This sequence belongs to the globin family. In terms of assembly, heterotetramer of two alpha chains and two beta chains. Red blood cells.

Functionally, involved in oxygen transport from the lung to the various peripheral tissues. Hemopressin acts as an antagonist peptide of the cannabinoid receptor CNR1. Hemopressin-binding efficiently blocks cannabinoid receptor CNR1 and subsequent signaling. This Equus quagga burchellii (Burchell's zebra) protein is Hemoglobin subunit alpha-1 (HBA1).